Consider the following 479-residue polypeptide: Adenosylhomocysteinase (479 aa).

Residues Thr65, Asp145, and Glu205 each coordinate substrate. 206–208 (TTT) is a binding site for NAD(+). Positions 235 and 239 each coordinate substrate. Residues Asn240, 269 to 274 (GYGDVG), Glu292, Asn327, 348 to 350 (IGH), and Asn393 each bind NAD(+).

This sequence belongs to the adenosylhomocysteinase family. NAD(+) is required as a cofactor.

It localises to the cytoplasm. It carries out the reaction S-adenosyl-L-homocysteine + H2O = L-homocysteine + adenosine. It functions in the pathway amino-acid biosynthesis; L-homocysteine biosynthesis; L-homocysteine from S-adenosyl-L-homocysteine: step 1/1. In terms of biological role, may play a key role in the regulation of the intracellular concentration of adenosylhomocysteine. The polypeptide is Adenosylhomocysteinase (Herminiimonas arsenicoxydans).